The chain runs to 155 residues: Ribonuclease H (155 aa).

Residues 4 to 145 (NISKVVIYTD…ADKLAAQGRQ (142 aa)) enclose the RNase H type-1 domain. The Mg(2+) site is built by aspartate 13, glutamate 51, aspartate 73, and aspartate 137.

Belongs to the RNase H family. As to quaternary structure, monomer. Requires Mg(2+) as cofactor.

The protein resides in the cytoplasm. The catalysed reaction is Endonucleolytic cleavage to 5'-phosphomonoester.. In terms of biological role, endonuclease that specifically degrades the RNA of RNA-DNA hybrids. The chain is Ribonuclease H from Rickettsia canadensis (strain McKiel).